Here is a 410-residue protein sequence, read N- to C-terminus: Pyruvate dehydrogenase complex protein X component, mitochondrial (410 aa).

A mitochondrion-targeting transit peptide spans 1 to 30 (MLSAISKVSTLKSCTRYLTKCNYHASAKLL). The 77-residue stretch at 32–108 (VKTFSMPAMS…DVGEPIAYIA (77 aa)) folds into the Lipoyl-binding domain. Lys-73 carries the N6-lipoyllysine modification. The region spanning 169–210 (TLLPSVSLLLAENNISKQKALKEIAPSGSNGRLLKGDVLAYL) is the Peripheral subunit-binding (PSBD) domain.

Belongs to the 2-oxoacid dehydrogenase family. As to quaternary structure, eukaryotic pyruvate dehydrogenase (PDH) complexes are organized as a core consisting of the oligomeric dihydrolipoamide acetyl-transferase (E2), around which are arranged multiple copies of pyruvate dehydrogenase (E1), dihydrolipoamide dehydrogenase (E3) and protein X (E3BP) bound by non-covalent bonds.

The protein localises to the mitochondrion matrix. Functionally, required for anchoring dihydrolipoamide dehydrogenase (E3) to the dihydrolipoamide transacetylase (E2) core of the pyruvate dehydrogenase complexes of eukaryotes. This specific binding is essential for a functional PDH complex. The polypeptide is Pyruvate dehydrogenase complex protein X component, mitochondrial (PDX1) (Saccharomyces cerevisiae (strain ATCC 204508 / S288c) (Baker's yeast)).